Reading from the N-terminus, the 466-residue chain is Coagulation factor VII (466 aa).

Residues 1–20 (MVSQALRLLCLLLGLQGCLA) form the signal peptide. The propeptide occupies 21–60 (AGGVAKASGGETRDMPWKPGPHRVFVTQEEAHGVLHRRRR). The 45-residue stretch at 61 to 105 (ANAFLEELRPGSLERECKEEQCSFEEAREIFKDAERTKLFWISYS) folds into the Gla domain. 4-carboxyglutamate occurs at positions 66, 67, 74, 76, 79, 80, 85, 86, 89, and 95. A disulfide bond links Cys-77 and Cys-82. In terms of domain architecture, EGF-like 1; calcium-binding spans 106 to 142 (DGDQCASSPCQNGGSCKDQLQSYICFCLPAFEGRNCE). Disulfide bonds link Cys-110–Cys-121, Cys-115–Cys-130, Cys-132–Cys-141, Cys-151–Cys-162, Cys-158–Cys-172, Cys-174–Cys-187, Cys-195–Cys-322, Cys-219–Cys-224, Cys-238–Cys-254, and Cys-370–Cys-389. The O-linked (Glc...) serine; alternate glycan is linked to Ser-112. Ser-112 is a glycosylation site (O-linked (Xyl...) serine; alternate). Ser-120 carries an O-linked (Fuc) serine glycan. Asp-123 bears the (3R)-3-hydroxyaspartate mark. Positions 147–188 (DQLICVNENGGCEQYCSDHTGTKRSCRCHEGYSLLADGVSCT) constitute an EGF-like 2 domain. Asn-205 is a glycosylation site (N-linked (GlcNAc...) asparagine). The Peptidase S1 domain occupies 213 to 452 (IVGGKVCPKG…YIEWLQKLMR (240 aa)). Residues His-253 and Asp-302 each act as charge relay system in the active site. Asn-382 is a glycosylation site (N-linked (GlcNAc...) asparagine). Position 398 (Asp-398) interacts with substrate. The cysteines at positions 400 and 428 are disulfide-linked. The Charge relay system role is filled by Ser-404.

It belongs to the peptidase S1 family. In terms of assembly, heterodimer of a light chain and a heavy chain linked by a disulfide bond. Interacts (activated) with iripin-8, a serine protease inhibitor from Ixodes ricinus saliva. The vitamin K-dependent, enzymatic carboxylation of some glutamate residues allows the modified protein to bind calcium. Post-translationally, the iron and 2-oxoglutarate dependent 3-hydroxylation of aspartate and asparagine is (R) stereospecific within EGF domains. In terms of processing, O- and N-glycosylated. N-glycosylation at Asn-205 occurs cotranslationally and is mediated by STT3A-containing complexes, while glycosylation at Asn-382 is post-translational and is mediated STT3B-containing complexes before folding. O-fucosylated by POFUT1 on a conserved serine or threonine residue found in the consensus sequence C2-X(4,5)-[S/T]-C3 of EGF domains, where C2 and C3 are the second and third conserved cysteines. Can be either O-glucosylated or O-xylosylated at Ser-112 by POGLUT1 in vitro. As to expression, plasma.

The protein resides in the secreted. It carries out the reaction Selective cleavage of Arg-|-Ile bond in factor X to form factor Xa.. In terms of biological role, initiates the extrinsic pathway of blood coagulation. Serine protease that circulates in the blood in a zymogen form. Factor VII is converted to factor VIIa by factor Xa, factor XIIa, factor IXa, or thrombin by minor proteolysis. In the presence of tissue factor and calcium ions, factor VIIa then converts factor X to factor Xa by limited proteolysis. Factor VIIa also converts factor IX to factor IXa in the presence of tissue factor and calcium. The chain is Coagulation factor VII (F7) from Homo sapiens (Human).